The sequence spans 395 residues: S-adenosylmethionine synthase (395 aa).

His14 is a binding site for ATP. Asp16 lines the Mg(2+) pocket. K(+) is bound at residue Glu42. Residues Glu55 and Gln98 each coordinate L-methionine. Positions Gln98–Lys108 are flexible loop. ATP contacts are provided by residues Asp175 to Lys177, Arg242 to Phe243, Asp251, Arg257 to Lys258, Ala274, and Lys278. Asp251 lines the L-methionine pocket. Lys282 is an L-methionine binding site.

It belongs to the AdoMet synthase family. As to quaternary structure, homotetramer; dimer of dimers. Mg(2+) is required as a cofactor. The cofactor is K(+).

It is found in the cytoplasm. It catalyses the reaction L-methionine + ATP + H2O = S-adenosyl-L-methionine + phosphate + diphosphate. It participates in amino-acid biosynthesis; S-adenosyl-L-methionine biosynthesis; S-adenosyl-L-methionine from L-methionine: step 1/1. Catalyzes the formation of S-adenosylmethionine (AdoMet) from methionine and ATP. The overall synthetic reaction is composed of two sequential steps, AdoMet formation and the subsequent tripolyphosphate hydrolysis which occurs prior to release of AdoMet from the enzyme. The polypeptide is S-adenosylmethionine synthase (Thermosipho africanus (strain TCF52B)).